A 921-amino-acid chain; its full sequence is MSKLFQDSNKRMSRIVDYDEIKFDPLSIIGSGGFGKVYQGVLNGKEIGIKKITISDNDPNRDILLKFLEREIYTLKMLSHPNVIKFYGIAEKERSLFLLTELVSGGDLHWYIKNKSIDITWKLKVKIARDIAASMAYLHENGVIHRDLKSTNLLVAENWVIKVCDMGLARKMDKSEKSKMTICGTDDWMAPEVLIGEEYDASCDVFSFGMVLIELITRENLTPRIRNEDLGVDQKFFLSKVPADCPKELLRLVSECCKVAPSGRPSASNILGLLEYILESELIVNSGGDYEPPLRSFKPPELHLPLNEKNNNNKNNNNNNNNNNNNNNNNNNNNNNNNNNNNNNNNNNNNNNLGNSGNIYDDFSFPRPYQPDDSAVDNINNNGNDDSHFSFPRPYQPGQSNINGGVNNNNSNDESHFSFPRPYQPGQSNINGCVNNNNNNSNNNNDSHFSFPRPHQTSVVILNDRGEEEPLVVSQKDQLEHDLEGGDDNEEDEMKQLKSQLNYSKFSFPRPYQSSKIISFNETELLSFPRPWNPESEENNNNKNNNNNEKSLLEDPKYSFPRPYNPDSDSNLSFKSTAKVITNPTPLTTTTTTTTATATTTSSSSTNSKVTTNSTSLPTTTTTTTTTTATTSSSSLSSIGKPPQSTYKVPTTINPSTSQRVITIPSRIVTSTATAQPKSRSNSNPPKPTVVISNSNNNFNDIVKPSSTIVNQNKTTTQPTTLINAPQKVTTPVNKQIQPLHKSNESVTVAATTATTPTTATSTTIKSSPTTPTSTNQNIEQIKITTPKDEDENKSETNDGGGDTVSHRRSRSLDIKNSTKAIIKKFEELTRFSSQQSNLVHQPSSSSSSTKQPPTSQFLQNPRMEAKLSFAQETLVFEKSPSTSPKSLDIPTSSSLTSNSNSSIPAPSSPTKKTFWNKPKK.

The region spanning 23–277 (FDPLSIIGSG…SNILGLLEYI (255 aa)) is the Protein kinase domain. ATP-binding positions include 29-37 (IGSGGFGKV) and Lys-50. The active-site Proton acceptor is Asp-147. 8 disordered regions span residues 289–453 (DYEP…SFPR), 465–492 (RGEE…NEED), 530–571 (RPWN…SDSN), 583–653 (NPTP…PTTI), 671–698 (STAT…SNNN), 737–813 (IQPL…SRSL), 833–858 (SSQQ…TSQF), and 877–921 (FEKS…KPKK). Composition is skewed to low complexity over residues 310 to 352 (NNNN…NNNN), 400 to 412 (SNIN…NNSN), and 429 to 445 (NING…NNNN). 2 stretches are compositionally biased toward low complexity: residues 539–550 (NNNNKNNNNNEK) and 583–638 (NPTP…SLSS). Over residues 643-653 (PQSTYKVPTTI) the composition is skewed to polar residues. Low complexity-rich tracts occupy residues 748–775 (TVAA…PTST), 842–857 (QPSS…PTSQ), and 892–910 (TSSS…PSSP).

The protein belongs to the protein kinase superfamily. TKL Ser/Thr protein kinase family.

The catalysed reaction is L-seryl-[protein] + ATP = O-phospho-L-seryl-[protein] + ADP + H(+). The enzyme catalyses L-threonyl-[protein] + ATP = O-phospho-L-threonyl-[protein] + ADP + H(+). The protein is Probable serine/threonine-protein kinase DDB_G0275165 of Dictyostelium discoideum (Social amoeba).